The sequence spans 610 residues: Aspartate--tRNA(Asp/Asn) ligase (610 aa).

Glu182 is a binding site for L-aspartate. Residues 206–209 form an aspartate region; it reads QLFK. Residue Arg228 coordinates L-aspartate. ATP is bound by residues 228-230 and Gln237; that span reads RDE. His470 is a binding site for L-aspartate. Glu506 contacts ATP. Arg513 is an L-aspartate binding site. 558–561 contacts ATP; the sequence is GLDR.

The protein belongs to the class-II aminoacyl-tRNA synthetase family. Type 1 subfamily. As to quaternary structure, homodimer.

It is found in the cytoplasm. The catalysed reaction is tRNA(Asx) + L-aspartate + ATP = L-aspartyl-tRNA(Asx) + AMP + diphosphate. In terms of biological role, aspartyl-tRNA synthetase with relaxed tRNA specificity since it is able to aspartylate not only its cognate tRNA(Asp) but also tRNA(Asn). Reaction proceeds in two steps: L-aspartate is first activated by ATP to form Asp-AMP and then transferred to the acceptor end of tRNA(Asp/Asn). The chain is Aspartate--tRNA(Asp/Asn) ligase from Acidobacterium capsulatum (strain ATCC 51196 / DSM 11244 / BCRC 80197 / JCM 7670 / NBRC 15755 / NCIMB 13165 / 161).